We begin with the raw amino-acid sequence, 118 residues long: NADH-quinone oxidoreductase subunit A (118 aa).

Helical transmembrane passes span 8-28 (ILIF…LNYL), 61-81 (FMYA…YPWA), and 86-106 (VLGL…VLGL).

This sequence belongs to the complex I subunit 3 family. As to quaternary structure, NDH-1 is composed of 14 different subunits. Subunits NuoA, H, J, K, L, M, N constitute the membrane sector of the complex.

Its subcellular location is the cell membrane. The catalysed reaction is a quinone + NADH + 5 H(+)(in) = a quinol + NAD(+) + 4 H(+)(out). Its function is as follows. NDH-1 shuttles electrons from NADH, via FMN and iron-sulfur (Fe-S) centers, to quinones in the respiratory chain. The immediate electron acceptor for the enzyme in this species is believed to be a menaquinone. Couples the redox reaction to proton translocation (for every two electrons transferred, four hydrogen ions are translocated across the cytoplasmic membrane), and thus conserves the redox energy in a proton gradient. The chain is NADH-quinone oxidoreductase subunit A from Carboxydothermus hydrogenoformans (strain ATCC BAA-161 / DSM 6008 / Z-2901).